Here is an 82-residue protein sequence, read N- to C-terminus: MNPLIASASVLAAALAIGLASLGPGLAQGNASGQALEGIARQPEAEGKIRGTLLLSLAFMESLTIYGLVIALVLLFANPFAS.

Helical transmembrane passes span 3–23 (PLIA…ASLG) and 57–77 (LAFM…LLFA).

F-type ATPases have 2 components, F(1) - the catalytic core - and F(0) - the membrane proton channel. F(1) has five subunits: alpha(3), beta(3), gamma(1), delta(1), epsilon(1). F(0) has four main subunits: a(1), b(1), b'(1) and c(10-14). The alpha and beta chains form an alternating ring which encloses part of the gamma chain. F(1) is attached to F(0) by a central stalk formed by the gamma and epsilon chains, while a peripheral stalk is formed by the delta, b and b' chains.

Its subcellular location is the cellular thylakoid membrane. Its activity is regulated as follows. Inhibited by dicyclohexylcarbodiimide. Functionally, f(1)F(0) ATP synthase produces ATP from ADP in the presence of a proton or sodium gradient. F-type ATPases consist of two structural domains, F(1) containing the extramembraneous catalytic core and F(0) containing the membrane proton channel, linked together by a central stalk and a peripheral stalk. During catalysis, ATP synthesis in the catalytic domain of F(1) is coupled via a rotary mechanism of the central stalk subunits to proton translocation. In terms of biological role, key component of the F(0) channel; it plays a direct role in translocation across the membrane. A homomeric c-ring of between 10-14 subunits forms the central stalk rotor element with the F(1) delta and epsilon subunits. Its function is as follows. The complex from the organism is particularly stable to disruption and remains functional after 6 hrs at 55 degrees Celsius. The polypeptide is ATP synthase subunit c (atpE) (Thermosynechococcus vestitus (strain NIES-2133 / IAM M-273 / BP-1)).